Reading from the N-terminus, the 160-residue chain is MPTFDVVSEVDKHELQNAIDQVNREIGTRFDFRGTEAHIEKSEEELILVAESEFQLQQMRTILDTKLAKRGVDVDCLEAKEPEIIGKRARQSIQVRQGIDKDTARKIIKIIKESKLKVQAAIQGEQVRISGKKRDDLQQVIALLREADLDLPLQYINFRD.

Belongs to the YajQ family.

In terms of biological role, nucleotide-binding protein. The protein is Nucleotide-binding protein Noc_2254 of Nitrosococcus oceani (strain ATCC 19707 / BCRC 17464 / JCM 30415 / NCIMB 11848 / C-107).